The chain runs to 588 residues: Adenine deaminase (588 aa).

This sequence belongs to the metallo-dependent hydrolases superfamily. Adenine deaminase family. In terms of assembly, homodimer. Mn(2+) serves as cofactor.

It carries out the reaction adenine + H2O + H(+) = hypoxanthine + NH4(+). This Shigella sonnei (strain Ss046) protein is Adenine deaminase.